The following is a 298-amino-acid chain: MFNSDKVKIGICPIGWTNDDMPDLGKENTFEQAISEMALAGFKGTEIGNKYPKDVKVLKKALEMRNLQIASAWFSSFLTTKPYEETEKEFIAYRDFLHAMGSKVIVVSEQGHSIQGQMETPIFDGKYHFNEEEWNLLANGLNKLGQLAADKGMKIVYHHHMGTGVQTTEEIDKLMSVTDENLVYLLFDTGHLVYSGENPVEILKKYVHRIKHVHLKDIRPEIVSKVKNEKLSFLKGVRAGAFTVPGDGSIDFEPIFKILAENNYEGWLMIEAEQDPSIANPLEYAIKGRQYIKEKASI.

This sequence belongs to the IolE/MocC family. The cofactor is glutathione. Requires Co(2+) as cofactor. Mn(2+) serves as cofactor.

It carries out the reaction scyllo-inosose = 3D-3,5/4-trihydroxycyclohexane-1,2-dione + H2O. It participates in polyol metabolism; myo-inositol degradation into acetyl-CoA; acetyl-CoA from myo-inositol: step 2/7. Its function is as follows. Catalyzes the dehydration of inosose (2-keto-myo-inositol, 2KMI or 2,4,6/3,5-pentahydroxycyclohexanone) to 3D-(3,5/4)-trihydroxycyclohexane-1,2-dione (D-2,3-diketo-4-deoxy-epi-inositol). This is Inosose dehydratase from Clostridium botulinum (strain Alaska E43 / Type E3).